Consider the following 550-residue polypeptide: Hydroxylamine reductase (550 aa).

Residues C3, C6, C18, and C25 each coordinate [2Fe-2S] cluster. Residues H249, E273, C317, C405, C433, C458, E492, and K494 each contribute to the hybrid [4Fe-2O-2S] cluster site. C405 bears the Cysteine persulfide mark.

The protein belongs to the HCP family. Requires [2Fe-2S] cluster as cofactor. It depends on hybrid [4Fe-2O-2S] cluster as a cofactor.

It is found in the cytoplasm. It carries out the reaction A + NH4(+) + H2O = hydroxylamine + AH2 + H(+). Its function is as follows. Catalyzes the reduction of hydroxylamine to form NH(3) and H(2)O. The sequence is that of Hydroxylamine reductase from Shigella boydii serotype 18 (strain CDC 3083-94 / BS512).